A 301-amino-acid chain; its full sequence is Protease HtpX (301 aa).

2 consecutive transmembrane segments (helical) span residues 4–24 (IGLF…ILSL) and 38–58 (LGNL…ISLL). His-147 provides a ligand contact to Zn(2+). Glu-148 is a catalytic residue. His-151 lines the Zn(2+) pocket. Transmembrane regions (helical) follow at residues 155 to 175 (GDMV…MFFA) and 200 to 220 (FAIT…IVMW). Glu-226 contributes to the Zn(2+) binding site.

This sequence belongs to the peptidase M48B family. Requires Zn(2+) as cofactor.

It is found in the cell inner membrane. This is Protease HtpX from Acinetobacter baylyi (strain ATCC 33305 / BD413 / ADP1).